The sequence spans 172 residues: Hemagglutinin/amebocyte aggregation factor (172 aa).

The signal sequence occupies residues 1–19 (MNSPAIVIIIFSTLTFSEA). 4 consecutive repeat copies span residues 21–25 (VNDWD), 50–54 (EDRRW), 73–77 (VNDWD), and 102–106 (EDRRW). 5 disulfides stabilise this stretch: Cys32-Cys58, Cys67-Cys172, Cys84-Cys110, Cys111-Cys117, and Cys123-Cys167. Repeat copies occupy residues 129–133 (VNSWD) and 158–162 (EDRRW).

The protein belongs to the dermatopontin family.

Its subcellular location is the secreted. Functionally, possesses the property of inducing both aggregation of amebocytes and agglutination of erythrocytes. The protein is Hemagglutinin/amebocyte aggregation factor of Limulus polyphemus (Atlantic horseshoe crab).